The sequence spans 161 residues: Regulator of ribonuclease activity A (161 aa).

It belongs to the RraA family. In terms of assembly, homotrimer. Binds to both RNA-binding sites in the C-terminal region of Rne and to RhlB.

The protein localises to the cytoplasm. Functionally, globally modulates RNA abundance by binding to RNase E (Rne) and regulating its endonucleolytic activity. Can modulate Rne action in a substrate-dependent manner by altering the composition of the degradosome. Modulates RNA-binding and helicase activities of the degradosome. The protein is Regulator of ribonuclease activity A of Escherichia fergusonii (strain ATCC 35469 / DSM 13698 / CCUG 18766 / IAM 14443 / JCM 21226 / LMG 7866 / NBRC 102419 / NCTC 12128 / CDC 0568-73).